We begin with the raw amino-acid sequence, 209 residues long: GTP-binding protein RHO1 (209 aa).

Ser-2 carries the N-acetylserine modification. Residue 17–24 coordinates GTP; the sequence is GDGACGKT. Positions 39–47 match the Effector region motif; that stretch reads YVPTVFENY. Residues 64-68 and 122-125 contribute to the GTP site; these read DTAGQ and CKVD. Positions 187–209 are disordered; it reads KSKTNGKAKKNTTEKKKKKCVLL. A compositionally biased stretch (basic residues) spans 190-209; it reads TNGKAKKNTTEKKKKKCVLL. Cysteine methyl ester is present on Cys-206. Residue Cys-206 is the site of S-geranylgeranyl cysteine attachment. A propeptide spans 207 to 209 (removed in mature form); the sequence is VLL.

Belongs to the small GTPase superfamily. Rho family. In terms of assembly, interacts with BEM4; the interaction is direct. Interacts with SEC3; the interaction is direct. Interacts with the GAP BAG7. Interacts with the GAP LRG1. Interacts with the GAP SAC7. Interacts with the GAP RDI1. Interacts with the 1,3-beta-glucan synthase component FKS1. Interacts with the protein kinase PKC1. Interacts with the G protein beta subunit STE4. Interacts with SKN7. Interacts with TUS1. Interacts with BNI1.

It is found in the cell membrane. It localises to the endosome membrane. Its subcellular location is the peroxisome membrane. It catalyses the reaction GTP + H2O = GDP + phosphate + H(+). Its activity is regulated as follows. Alternates between an inactive form bound to GDP and an active form bound to GTP. Activated by the guanine nucleotide-exchange factors (GEFs) ROM1, ROM2 and TUS1, and inactivated by GTPase-activating proteins (GAPs) BAG7, BEM2, LRG1, and SAC7, and the Rho GDP-dissociation inhibitor RDI1. The different GAPs regulate RHO1 in a target-specific manner. Functionally, acts as a central regulator in the cell wall integrity signaling pathway, which is regulated by the cell cycle and in response to various types of cell wall stress. Integrates signals from different cell surface sensors, and activates a set of effectors, regulating processes including beta-glucan synthesis at the site of wall remodeling, gene expression related to cell wall biogenesis, organization of the actin cytoskeleton, and protein- and secretory vesicle-targeting to the growth site. Activates the protein kinase C (PKC1) MAP kinase cascade, the beta-1,3-glucan synthase (FKS1), the formin BNI1, the exocyst component SEC3 and the transcription factor SKN7. The sequence is that of GTP-binding protein RHO1 (RHO1) from Saccharomyces cerevisiae (strain ATCC 204508 / S288c) (Baker's yeast).